A 300-amino-acid chain; its full sequence is Erythroblast NAD(P)(+)--arginine ADP-ribosyltransferase (300 aa).

The N-terminal stretch at 1–22 (MEEPLLHAILGLVLLLSTRTDA) is a signal peptide. 2 disulfide bridges follow: cysteine 51–cysteine 260 and cysteine 159–cysteine 208. One can recognise a TR mART core domain in the interval 70-256 (ETFAEGWRSA…IQLRSQGKSS (187 aa)). Tyrosine 107, arginine 164, and glutamine 183 together coordinate NAD(+). The active site involves arginine 164. Residue serine 186 is part of the active site. Serine 217 provides a ligand contact to NAD(+). Glutamate 224 is a catalytic residue. Positions 276 to 300 (SADKSSPLPRSPWPGWAPLAAPHSH) are disordered.

The protein belongs to the Arg-specific ADP-ribosyltransferase family.

The enzyme catalyses L-arginyl-[protein] + NAD(+) = N(omega)-(ADP-D-ribosyl)-L-arginyl-[protein] + nicotinamide + H(+). The polypeptide is Erythroblast NAD(P)(+)--arginine ADP-ribosyltransferase (MADPRT) (Gallus gallus (Chicken)).